The sequence spans 98 residues: Small ribosomal subunit protein bS21B (98 aa).

The disordered stretch occupies residues 61 to 98; the sequence is KLQREGLLPMKPKPVFGAGAGGERGGRGGPGAGPRGPR. The span at 78-98 shows a compositional bias: gly residues; sequence AGAGGERGGRGGPGAGPRGPR.

Belongs to the bacterial ribosomal protein bS21 family.

This chain is Small ribosomal subunit protein bS21B, found in Bradyrhizobium diazoefficiens (strain JCM 10833 / BCRC 13528 / IAM 13628 / NBRC 14792 / USDA 110).